Consider the following 74-residue polypeptide: ATP synthase subunit 9, mitochondrial (74 aa).

The next 2 membrane-spanning stretches (helical) occupy residues 16-36 (GLIG…LGVA) and 50-70 (ILGF…AFLL).

It belongs to the ATPase C chain family. F-type ATPases have 2 components, CF(1) - the catalytic core - and CF(0) - the membrane proton channel. CF(1) has five subunits: alpha(3), beta(3), gamma(1), delta(1), epsilon(1). CF(0) has three main subunits: a, b and c.

Its subcellular location is the mitochondrion membrane. Functionally, mitochondrial membrane ATP synthase (F(1)F(0) ATP synthase or Complex V) produces ATP from ADP in the presence of a proton gradient across the membrane which is generated by electron transport complexes of the respiratory chain. F-type ATPases consist of two structural domains, F(1) - containing the extramembraneous catalytic core and F(0) - containing the membrane proton channel, linked together by a central stalk and a peripheral stalk. During catalysis, ATP synthesis in the catalytic domain of F(1) is coupled via a rotary mechanism of the central stalk subunits to proton translocation. Part of the complex F(0) domain. A homomeric c-ring of probably 10 subunits is part of the complex rotary element. The sequence is that of ATP synthase subunit 9, mitochondrial (ATP9) from Trichophyton rubrum (Athlete's foot fungus).